Consider the following 993-residue polypeptide: MATSSFNINELVASHGDKGLLATALVDKTAHEQLEEQLQHQRRGRKVYIRNVLGVKDSEVIRNRYGGKYDLHLTQQEFAPHGLAGALRLCETLDCLDSFPSSGLRQDLVLDFGGSWVTHYLRGHNVHCCSPCLGIRDKMRHAERLMNMRKIILNDPQQFDGRQPDFCTHPAADCKVQAHFAISIHGGYDMGFRGLCEAMNAHGTTILKGTMMFDGAMMFDDQGVIPELNCQWRKIRTAFSETEDATPLSEKLNSTIFSHVRKFKTMVAFDFINESTMSYVHDWENIKSFLTDQTYSYRGMTYGIERCVIHAGIMTYKIIGVPGMCPPELIRHCIWFPSIKDYVGLKIPASQDLVEWKTVRILTSTLRETEEIAMRCYNDKKAWMEQFKVILGVLSAKSSTIVINGMSMQSGERIDINDYHYIGFAILLHTKMKYEQLGKMYDMWNASYISKWFAALTRPLRVFFSSVVHALFPTLRPREEKEFLIKLSTFVTFNVECSFDGGEEWDVISSAAYVATQAVTDGKVLAAQKAEKLAEKLAQPVIEVSDRPEAPSSTPDDTADVCGKEQEVSELDSLSAQTRSPITRVAERATAMLEYAAYEKQLHDTTVSNLKRIWNMAGGDDKRNSLEGNLKFVFDTYFTVDPMVNIHFSTGRWMRPVPEGIVYSVGFNERGLGPKSDGELYIVNSECVICNSESLSTVTRSLQAPTGTISQVDGVAGCGKTTAIKSIFEPSTDMIVTANKKSAQDVRMALFKSSDSKEACTFVRTADSVLLNECPTVSRVLVDEVVLLHFGQLCAVMSKLKAVRAICFGDSEQIAFSSRDASFDMRFSKIIPDETSDADTTFRSPQDVVPLVRLMATKALPKGTHSKYTKWVSQSKVKRSVTSRAIASVTLVDLDSSRFYITMTQADKASLISRAKEMNLPKTFWNERIKTVHESQGISEDHVTLVRLKSTKCDLFKQFSYCLVALTRHKVTFRYEHCGVLNGDLIAECIARA.

The interval 51–409 (NVLGVKDSEV…TIVINGMSMQ (359 aa)) is methyltransferase. The Alphavirus-like MT domain occupies 72-290 (HLTQQEFAPH…HDWENIKSFL (219 aa)). The tract at residues 545-576 (SDRPEAPSSTPDDTADVCGKEQEVSELDSLSA) is disordered. Residues 687-838 (CVICNSESLS…KIIPDETSDA (152 aa)) enclose the (+)RNA virus helicase ATP-binding domain. An ATP-dependent helicase region spans residues 712–975 (VDGVAGCGKT…LTRHKVTFRY (264 aa)). Residue 714 to 721 (GVAGCGKT) participates in ATP binding. Residues 839-993 (DTTFRSPQDV…DLIAECIARA (155 aa)) form the (+)RNA virus helicase C-terminal domain.

It belongs to the bromoviridae replication protein 1a family. In terms of assembly, interacts with RNA-directed RNA polymerase 2a.

Its subcellular location is the host endoplasmic reticulum membrane. Functionally, involved in the virus replication. Contains a helicase domain and a methyltransferase domain. The methyltransferase domain is probably involved in viral RNA capping. Involved in the formation of ER membrane spherular invaginations in which RNA replication complexes form. The protein is Replication protein 1a of Cucumis sativus (Cucumber).